Reading from the N-terminus, the 89-residue chain is Dynein light chain 1, cytoplasmic (89 aa).

The protein belongs to the dynein light chain family. As to quaternary structure, interacts with spn-F. Forms ternary complexes with spn-F and IKKepsilon. Ubiquitous.

It is found in the cytoplasm. Its subcellular location is the cytoskeleton. In terms of biological role, acts as a non-catalytic accessory component of a dynein complex. This Drosophila melanogaster (Fruit fly) protein is Dynein light chain 1, cytoplasmic (ctp).